The chain runs to 56 residues: Ovomucoid (56 aa).

The Kazal-like domain maps to 6-56 (VDCSDHPKPACLQEQKPLCGSDNKTYDNKCSFCNAVVDSNGTLTLSHFGKC). 3 disulfides stabilise this stretch: Cys-8/Cys-38, Cys-16/Cys-35, and Cys-24/Cys-56. Asn-45 carries an N-linked (GlcNAc...) asparagine glycan.

It is found in the secreted. This is Ovomucoid from Penelope jacquacu (Spix's guan).